The following is a 311-amino-acid chain: tRNA-cytidine(32) 2-sulfurtransferase (311 aa).

The PP-loop motif signature appears at 47-52 (SGGKDS). The [4Fe-4S] cluster site is built by cysteine 122, cysteine 125, and cysteine 213.

Belongs to the TtcA family. As to quaternary structure, homodimer. Mg(2+) serves as cofactor. It depends on [4Fe-4S] cluster as a cofactor.

It is found in the cytoplasm. The catalysed reaction is cytidine(32) in tRNA + S-sulfanyl-L-cysteinyl-[cysteine desulfurase] + AH2 + ATP = 2-thiocytidine(32) in tRNA + L-cysteinyl-[cysteine desulfurase] + A + AMP + diphosphate + H(+). It participates in tRNA modification. Functionally, catalyzes the ATP-dependent 2-thiolation of cytidine in position 32 of tRNA, to form 2-thiocytidine (s(2)C32). The sulfur atoms are provided by the cysteine/cysteine desulfurase (IscS) system. The chain is tRNA-cytidine(32) 2-sulfurtransferase from Escherichia coli (strain SMS-3-5 / SECEC).